Here is a 368-residue protein sequence, read N- to C-terminus: NAD(P)H-quinone oxidoreductase subunit 1, chloroplastic (368 aa).

9 consecutive transmembrane segments (helical) span residues 11 to 31, 33 to 53, 98 to 118, 131 to 151, 177 to 197, 205 to 225, 255 to 275, 305 to 325, and 348 to 368; these read RVIN…LIWI, IYIL…VWLE, WLFS…YLVI, IGVF…LMAG, LALC…VDIV, FWGW…ISSL, FGLF…FVTI, VLGI…FLFI, and FLLP…LLLL.

Belongs to the complex I subunit 1 family. As to quaternary structure, NDH is composed of at least 16 different subunits, 5 of which are encoded in the nucleus.

The protein localises to the plastid. The protein resides in the chloroplast thylakoid membrane. It carries out the reaction a plastoquinone + NADH + (n+1) H(+)(in) = a plastoquinol + NAD(+) + n H(+)(out). The enzyme catalyses a plastoquinone + NADPH + (n+1) H(+)(in) = a plastoquinol + NADP(+) + n H(+)(out). Its function is as follows. NDH shuttles electrons from NAD(P)H:plastoquinone, via FMN and iron-sulfur (Fe-S) centers, to quinones in the photosynthetic chain and possibly in a chloroplast respiratory chain. The immediate electron acceptor for the enzyme in this species is believed to be plastoquinone. Couples the redox reaction to proton translocation, and thus conserves the redox energy in a proton gradient. The chain is NAD(P)H-quinone oxidoreductase subunit 1, chloroplastic from Cycas taitungensis (Prince sago).